A 123-amino-acid polypeptide reads, in one-letter code: Small ribosomal subunit protein uS12cz/uS12cy (123 aa).

Belongs to the universal ribosomal protein uS12 family. Part of the 30S ribosomal subunit.

It localises to the plastid. The protein localises to the chloroplast. Its function is as follows. With S4 and S5 plays an important role in translational accuracy. Located at the interface of the 30S and 50S subunits. This Arabis hirsuta (Hairy rock-cress) protein is Small ribosomal subunit protein uS12cz/uS12cy (rps12-A).